Reading from the N-terminus, the 872-residue chain is Alanine--tRNA ligase (872 aa).

Positions 567, 571, 669, and 673 each coordinate Zn(2+).

Belongs to the class-II aminoacyl-tRNA synthetase family. The cofactor is Zn(2+).

The protein localises to the cytoplasm. It catalyses the reaction tRNA(Ala) + L-alanine + ATP = L-alanyl-tRNA(Ala) + AMP + diphosphate. Its function is as follows. Catalyzes the attachment of alanine to tRNA(Ala) in a two-step reaction: alanine is first activated by ATP to form Ala-AMP and then transferred to the acceptor end of tRNA(Ala). Also edits incorrectly charged Ser-tRNA(Ala) and Gly-tRNA(Ala) via its editing domain. In Streptococcus pyogenes serotype M6 (strain ATCC BAA-946 / MGAS10394), this protein is Alanine--tRNA ligase.